The sequence spans 388 residues: Succinate--CoA ligase [ADP-forming] subunit beta (388 aa).

Residues 9-244 (KALFAEYGLP…PSQDDAREAH (236 aa)) enclose the ATP-grasp domain. ATP contacts are provided by residues Lys46, 53–55 (GRG), Glu99, Thr102, and Glu107. Residues Asn199 and Asp213 each contribute to the Mg(2+) site. Substrate contacts are provided by residues Asn264 and 321-323 (GIV).

Belongs to the succinate/malate CoA ligase beta subunit family. Heterotetramer of two alpha and two beta subunits. It depends on Mg(2+) as a cofactor.

It carries out the reaction succinate + ATP + CoA = succinyl-CoA + ADP + phosphate. It catalyses the reaction GTP + succinate + CoA = succinyl-CoA + GDP + phosphate. It participates in carbohydrate metabolism; tricarboxylic acid cycle; succinate from succinyl-CoA (ligase route): step 1/1. Functionally, succinyl-CoA synthetase functions in the citric acid cycle (TCA), coupling the hydrolysis of succinyl-CoA to the synthesis of either ATP or GTP and thus represents the only step of substrate-level phosphorylation in the TCA. The beta subunit provides nucleotide specificity of the enzyme and binds the substrate succinate, while the binding sites for coenzyme A and phosphate are found in the alpha subunit. The polypeptide is Succinate--CoA ligase [ADP-forming] subunit beta (Shewanella loihica (strain ATCC BAA-1088 / PV-4)).